The sequence spans 728 residues: Polyribonucleotide nucleotidyltransferase (728 aa).

Mg(2+)-binding residues include Asp-487 and Asp-493. The region spanning 554–613 (PRIEVITVPTDKIREVIGTGGKVIREIVEKTGAKVDISDDGTIKVASSDGESIRKAIAWI) is the KH domain. The S1 motif domain occupies 623 to 691 (GKIYEGTVVK…DRGKVRLSMK (69 aa)). The span at 697–707 (TGEEIVYENEP) shows a compositional bias: acidic residues. The interval 697–728 (TGEEIVYENEPAEQPREKREGGGGRGRRRERD) is disordered. A compositionally biased stretch (basic and acidic residues) spans 709 to 718 (EQPREKREGG).

Belongs to the polyribonucleotide nucleotidyltransferase family. Mg(2+) is required as a cofactor.

It is found in the cytoplasm. The enzyme catalyses RNA(n+1) + phosphate = RNA(n) + a ribonucleoside 5'-diphosphate. Involved in mRNA degradation. Catalyzes the phosphorolysis of single-stranded polyribonucleotides processively in the 3'- to 5'-direction. This is Polyribonucleotide nucleotidyltransferase from Parvibaculum lavamentivorans (strain DS-1 / DSM 13023 / NCIMB 13966).